The following is a 342-amino-acid chain: Isopentenyl-diphosphate delta-isomerase (342 aa).

11 to 12 (RK) is a binding site for substrate. FMN contacts are provided by residues Ser68, 69–71 (SMT), Ser99, and Asn127. Residue 99–101 (SMR) participates in substrate binding. Gln162 serves as a coordination point for substrate. A Mg(2+)-binding site is contributed by Glu163. Residues Lys194, Thr224, 274–276 (GLK), and 295–296 (AG) each bind FMN.

The protein belongs to the IPP isomerase type 2 family. In terms of assembly, homooctamer. Dimer of tetramers. Requires FMN as cofactor. It depends on NADPH as a cofactor. Mg(2+) is required as a cofactor.

It is found in the cytoplasm. It catalyses the reaction isopentenyl diphosphate = dimethylallyl diphosphate. Involved in the biosynthesis of isoprenoids. Catalyzes the 1,3-allylic rearrangement of the homoallylic substrate isopentenyl (IPP) to its allylic isomer, dimethylallyl diphosphate (DMAPP). In Rickettsia canadensis (strain McKiel), this protein is Isopentenyl-diphosphate delta-isomerase.